A 440-amino-acid chain; its full sequence is tRNA(Ile)-lysidine synthase (440 aa).

13-18 (SGGADS) is an ATP binding site.

It belongs to the tRNA(Ile)-lysidine synthase family.

It localises to the cytoplasm. The catalysed reaction is cytidine(34) in tRNA(Ile2) + L-lysine + ATP = lysidine(34) in tRNA(Ile2) + AMP + diphosphate + H(+). Ligates lysine onto the cytidine present at position 34 of the AUA codon-specific tRNA(Ile) that contains the anticodon CAU, in an ATP-dependent manner. Cytidine is converted to lysidine, thus changing the amino acid specificity of the tRNA from methionine to isoleucine. The protein is tRNA(Ile)-lysidine synthase of Solibacter usitatus (strain Ellin6076).